We begin with the raw amino-acid sequence, 415 residues long: Fructose-like permease IIC component 1 (415 aa).

Topologically, residues 1-46 (MAIKKRSATVVPGASGAAAAVKNPQASKTSFWGELPQHVMSGISRM) are cytoplasmic. One can recognise a PTS EIIC type-2 domain in the interval 35–410 (LPQHVMSGIS…RLMMFRKGKL (376 aa)). The helical transmembrane segment at 47–67 (VPTLIMGGVILAFSQLIAYSW) threads the bilayer. The Periplasmic segment spans residues 68–101 (LKIPAEIGIMDALNSGKFSGFDLSLLKFAWLSQS). Residues 102–122 (FGGVLFGFAIPMFAAFVANSI) form a helical membrane-spanning segment. At 123–126 (GGKL) the chain is on the cytoplasmic side. The chain crosses the membrane as a helical span at residues 127–147 (AFPAGFIGGLMSTQPTQLLNF). The Periplasmic segment spans residues 148–157 (DPSTMQWATS). Residues 158-178 (SPVPSTFIGALIISIVAGYLV) traverse the membrane as a helical segment. Residues 179–197 (KWMNQKIQLPDFLLAFKTT) are Cytoplasmic-facing. The helical transmembrane segment at 198-218 (FLLPILSAIFVMLAMYYVITP) threads the bilayer. Residues 219–237 (FGGWINGGIRTVLTAAGEK) lie on the Periplasmic side of the membrane. Residues 238 to 258 (GALMYAMGIAAATAIDLGGPI) traverse the membrane as a helical segment. The Cytoplasmic portion of the chain corresponds to 259–276 (NKAAGFVAFSFTTDHVLP). A helical membrane pass occupies residues 277–297 (VTARSIAIVIPPIGLGLATII). At 298–318 (DRRLTGKRLFNAQLYPQGKTA) the chain is on the periplasmic side. Residues 319–339 (MFLAFMGISEGAIPFALESPI) traverse the membrane as a helical segment. At 340–341 (TA) the chain is on the cytoplasmic side. The chain crosses the membrane as a helical span at residues 342–362 (IPSYMVGAIVGSTAAVWLGAV). Residues 363–378 (QWFPESAIWAWPLVTN) lie on the Periplasmic side of the membrane. A helical membrane pass occupies residues 379–399 (LGVYMAGIALGAVITALMVVF). Residues 400 to 415 (LRLMMFRKGKLLIDSL) lie on the Cytoplasmic side of the membrane.

It localises to the cell inner membrane. Functionally, the phosphoenolpyruvate-dependent sugar phosphotransferase system (PTS), a major carbohydrate active -transport system, catalyzes the phosphorylation of incoming sugar substrates concomitant with their translocation across the cell membrane. This chain is Fructose-like permease IIC component 1 (fryC), found in Escherichia coli (strain K12).